Reading from the N-terminus, the 812-residue chain is NKSRKRRNRVSFLGVTTVEPPKPIPLTWKTEKLVWVNQWPLPKQKLEALHLLANEQLEKGHIEPSFSPWNSPVFVIQKKSSKWRMLTDLRAVNAVIQPMGPLQPGLPSPAMIPKDWPLIIIDLKDCFFTIPLAEQDCEKFAFTIPAINNKEPATRFQWKVLPQGMLNSPTICQTFVGRALQPVRDKFSDCYIIHYFDDILCAAETKDKLIDCYTFLQAEVANAGLAIASDKIQTSTPFHYLGMQIENRKIKPQKIEIRKDTLKTLNDFQKLLGDINWIRPTLGIPTYAMSNLFSILRGDSDLNSKRMLTPEATKEIKLVEEKIQSAQINRIDPLAPLQLLIFATAHSPTGIIIQNTDLVEWSFLPHSTVKTFTLYLDQIATLIGPTRLRIIKLCGNDPDKIVVPLTKEQVRQAFINSGAWQIGLANFVGIIDNHYPKTKIFQFLKLTTWILPKITRREPLENALTVFTDGSSNGKVAYTGPKERVIKTPYQSAQRAELVAVITVLQDFDQPINIISDSAYVVQATRDVETALIKYSMDDQLNQLFNLLQQTVRKRNFPFYITHIRAHTNLPGPLTKANEQADLLVSSAFIKAQELHALTHVNAAGLKNKFDVTWKQAKDIVQHCTQCQVLDLPTQEAGVNPEVCVLMHYGKWMSHMYLHLGRLSYVHVTVDTYSHFMCATCQTGESTSHVKKHLLSCFAVMGVPEKIKTDNGPGYCSKAFQKFLSQWKISHTTGIPYNSQGQAIVERTNRTLKTQLVKQKEGGDSKECTTPQMQLNLALYTLNFLNIYRNQTTTSAEHLTGKKNSPHEGKLI.

The region spanning 57–245 (LEKGHIEPSF…TPFHYLGMQI (189 aa)) is the Reverse transcriptase domain. An LPQG motif is present at residues 161 to 164 (LPQG). Residues 195–198 (YFDD) carry the YXDD motif. An RNase H type-1 domain is found at 460–590 (LENALTVFTD…ADLLVSSAFI (131 aa)). Positions 469, 497, 517, and 582 each coordinate Mg(2+). An Integrase-type zinc finger spans residues 587–628 (SAFIKAQELHALTHVNAAGLKNKFDVTWKQAKDIVQHCTQCQ). Residues histidine 596, histidine 600, cysteine 624, and cysteine 627 each coordinate Zn(2+). The region spanning 637 to 803 (AGVNPEVCVL…TSAEHLTGKK (167 aa)) is the Integrase catalytic domain.

Belongs to the beta type-B retroviral polymerase family. HERV class-II K(HML-2) pol subfamily.

The enzyme catalyses DNA(n) + a 2'-deoxyribonucleoside 5'-triphosphate = DNA(n+1) + diphosphate. The catalysed reaction is Endonucleolytic cleavage to 5'-phosphomonoester.. In terms of biological role, early post-infection, the reverse transcriptase converts the viral RNA genome into double-stranded viral DNA. The RNase H domain of the reverse transcriptase performs two functions. It degrades the RNA template and specifically removes the RNA primer from the RNA/DNA hybrid. Following nuclear import, the integrase catalyzes the insertion of the linear, double-stranded viral DNA into the host cell chromosome. Endogenous Pol proteins may have kept, lost or modified their original function during evolution. This is Endogenous retrovirus group K member 18 Pol protein (ERVK-18) from Homo sapiens (Human).